The chain runs to 290 residues: Lipoyl synthase (290 aa).

[4Fe-4S] cluster-binding residues include cysteine 44, cysteine 49, cysteine 55, cysteine 70, cysteine 74, cysteine 77, and serine 281. In terms of domain architecture, Radical SAM core spans 56–270 (WRCGTATFMI…KQIGLEKGFS (215 aa)).

Belongs to the radical SAM superfamily. Lipoyl synthase family. The cofactor is [4Fe-4S] cluster.

Its subcellular location is the cytoplasm. The enzyme catalyses [[Fe-S] cluster scaffold protein carrying a second [4Fe-4S](2+) cluster] + N(6)-octanoyl-L-lysyl-[protein] + 2 oxidized [2Fe-2S]-[ferredoxin] + 2 S-adenosyl-L-methionine + 4 H(+) = [[Fe-S] cluster scaffold protein] + N(6)-[(R)-dihydrolipoyl]-L-lysyl-[protein] + 4 Fe(3+) + 2 hydrogen sulfide + 2 5'-deoxyadenosine + 2 L-methionine + 2 reduced [2Fe-2S]-[ferredoxin]. Its pathway is protein modification; protein lipoylation via endogenous pathway; protein N(6)-(lipoyl)lysine from octanoyl-[acyl-carrier-protein]: step 2/2. Its function is as follows. Catalyzes the radical-mediated insertion of two sulfur atoms into the C-6 and C-8 positions of the octanoyl moiety bound to the lipoyl domains of lipoate-dependent enzymes, thereby converting the octanoylated domains into lipoylated derivatives. In Treponema denticola (strain ATCC 35405 / DSM 14222 / CIP 103919 / JCM 8153 / KCTC 15104), this protein is Lipoyl synthase.